A 481-amino-acid polypeptide reads, in one-letter code: MNDNKKLGVIALAGVVISAMLGGGVYNLPQNMAQSASAGAILISWIITGIGIWFIANTFRILAAARPDATTGIYTYGELGFGKFTGFLMAWGYWICNSFANVGYAVLLMDSLNYFFPPYFKGGNNWLSIACGSLVLWIIFFIVLAGVKQASALNVIGTIGKLLPLAIFLLVLLFSFRFSTFFTDFWGLKTVAKVHDTNLGGILPQVKSTMLVTLWVFTGIEGAVVVSGRAKSQKDVSKATFLGFITCLLIYTLLSLLPLGVYSQGEISKMAPPSTAAVLMDLIGNWGSVIMNLGVIIAILSSWLIWTVMLSELPFAAAQSGTFPKIFAKENKNESPSFSLLASTIIMQIILILVHFAGNAWNMMLSITSVMALPCYLVSTLYLFKITYKNENYPTDIFAKRKYAMITAILGSIYGVWLIYAAGINYMLIAIVIYALGIPVFIKARRETSPNEKEFTKVERYFAIVLIILALIGLVYLFKFM.

A run of 13 helical transmembrane segments spans residues leucine 7–asparagine 27, alanine 36–alanine 56, phenylalanine 87–leucine 107, leucine 127–valine 147, isoleucine 156–phenylalanine 176, serine 208–glycine 228, phenylalanine 241–valine 261, valine 289–methionine 309, phenylalanine 338–glycine 358, methionine 364–phenylalanine 384, arginine 401–alanine 421, alanine 422–isoleucine 442, and tyrosine 461–methionine 481.

It belongs to the amino acid-polyamine-organocation (APC) superfamily. Basic amino acid/polyamine antiporter (APA) (TC 2.A.3.2) family.

It localises to the cell membrane. Its function is as follows. Could be an amino acid transporter. This is Putative amino-acid transporter CPE0389 from Clostridium perfringens (strain 13 / Type A).